Consider the following 439-residue polypeptide: Ornithine aminotransferase, mitochondrial (439 aa).

A mitochondrion-targeting transit peptide spans 1–25; the sequence is MLSKLARLQTVAGLGLGVHSSVASA. N6-acetyllysine is present on residues Lys49 and Lys66. Residue Lys102 is modified to N6-succinyllysine. The residue at position 107 (Lys107) is an N6-acetyllysine; alternate. Lys107 is subject to N6-succinyllysine; alternate. At Lys292 the chain carries N6-(pyridoxal phosphate)lysine. Lys362 is modified (N6-acetyllysine; alternate). Lys362 carries the post-translational modification N6-succinyllysine; alternate. 2 positions are modified to N6-acetyllysine: Lys386 and Lys392. At Lys405 the chain carries N6-acetyllysine; alternate. Lys405 is modified (N6-succinyllysine; alternate). Residue Lys421 is modified to N6-acetyllysine.

Belongs to the class-III pyridoxal-phosphate-dependent aminotransferase family. In terms of assembly, homohexamer. Pyridoxal 5'-phosphate is required as a cofactor.

Its subcellular location is the mitochondrion matrix. It catalyses the reaction L-ornithine + 2-oxoglutarate = L-glutamate 5-semialdehyde + L-glutamate. The protein operates within amino-acid biosynthesis; L-proline biosynthesis; L-glutamate 5-semialdehyde from L-ornithine: step 1/1. In terms of biological role, catalyzes the reversible interconversion of L-ornithine and 2-oxoglutarate to L-glutamate semialdehyde and L-glutamate. In Bos taurus (Bovine), this protein is Ornithine aminotransferase, mitochondrial (OAT).